A 171-amino-acid polypeptide reads, in one-letter code: Ribosome maturation factor RimP (171 aa).

The protein belongs to the RimP family.

The protein resides in the cytoplasm. Required for maturation of 30S ribosomal subunits. This is Ribosome maturation factor RimP from Anaeromyxobacter sp. (strain Fw109-5).